We begin with the raw amino-acid sequence, 236 residues long: Small ribosomal subunit protein uS2c (236 aa).

This sequence belongs to the universal ribosomal protein uS2 family.

The protein localises to the plastid. The protein resides in the chloroplast. The polypeptide is Small ribosomal subunit protein uS2c (rps2) (Lepidium virginicum (Virginia pepperweed)).